The chain runs to 603 residues: Insulin-like growth factor-binding protein complex acid labile subunit (603 aa).

Residues 1 to 23 (MALRTGSPALVVLLAFWVALGPC) form the signal peptide. One can recognise an LRRNT domain in the interval 32–74 (ASADAEGPQCPVTCTCSYDDYTDELSVFCSSRNLTQLPDGIPV). Intrachain disulfides connect Cys-41-Cys-47 and Cys-45-Cys-60. Asn-64, Asn-85, and Asn-96 each carry an N-linked (GlcNAc...) asparagine glycan. 19 LRR repeats span residues 75–96 (STRA…AFQN), 99–120 (SLDF…ALLG), 123–144 (NLYH…LFRH), 147–168 (SLAS…LFRG), 171–192 (HLWD…VFQG), 195–216 (NLHE…LLCG), 219–240 (ELRE…VFIH), 243–264 (RLQK…AFLG), 267–288 (ALRW…TFPG), 291–312 (GLHV…TFKD), 315–336 (FLEE…TFEG), 339–360 (QLEV…AFFG), 363–384 (NVAV…VFQG), 387–408 (RLHS…TFAG), 411–432 (GLRR…SLAG), 435–456 (ELLE…LFQG), 459–480 (QLEY…VLGP), 483–504 (RAFW…LFSS), and 507–528 (RLRY…PGLE). A glycan (N-linked (GlcNAc...) asparagine) is linked at Asn-368. A glycan (N-linked (GlcNAc...) asparagine) is linked at Asn-515. An LRRCT domain is found at 535–603 (NPWDCSCPLK…DISETLFVHC (69 aa)). 3 disulfides stabilise this stretch: Cys-539–Cys-581, Cys-541–Cys-603, and Cys-565–Cys-570. N-linked (GlcNAc...) asparagine glycosylation is found at Asn-578 and Asn-586.

As to quaternary structure, forms a ternary complex with IGF1 and IGFBP3.

It localises to the secreted. The protein localises to the extracellular space. May have an important role in regulating the access of circulating IGFs to the tissues. In Mus musculus (Mouse), this protein is Insulin-like growth factor-binding protein complex acid labile subunit (Igfals).